The following is an 860-amino-acid chain: DNA mismatch repair protein MutS (860 aa).

620 to 627 (GPNMGGKS) contributes to the ATP binding site.

It belongs to the DNA mismatch repair MutS family.

Functionally, this protein is involved in the repair of mismatches in DNA. It is possible that it carries out the mismatch recognition step. This protein has a weak ATPase activity. This is DNA mismatch repair protein MutS from Dechloromonas aromatica (strain RCB).